A 748-amino-acid chain; its full sequence is Pentatricopeptide repeat-containing protein At3g13880 (748 aa).

PPR repeat units follow at residues 46–80 (DSEG…SLNP), 81–111 (CLYL…MPER), 112–146 (NIIS…NLKL), 147–181 (DKFT…GLSQ), 182–212 (QVFL…CDER), 213–247 (DQVS…GLNL), 248–285 (TTYA…GMEF), 286–316 (DIVV…MPSK), 317–356 (NVVT…GLEP), 357–391 (SPST…NFQS), 392–422 (DEFI…TSKQ), 423–457 (DIAS…HIRP), 458–492 (EEYT…GIDA), 493–523 (FTSV…VQNP), 524–558 (DVAT…GIKP), 559–589 (NQQA…MKND), and 595–629 (NEKH…DHPV). A type E motif region spans residues 630–705 (TWRALLSSCR…EPALSWIVIG (76 aa)). Residues 706-736 (NQTHSFAVADLSHPSSQMIYTMLETMDNVDF) form a type E(+) motif region.

It belongs to the PPR family. PCMP-E subfamily.

This chain is Pentatricopeptide repeat-containing protein At3g13880 (PCMP-E89), found in Arabidopsis thaliana (Mouse-ear cress).